The chain runs to 396 residues: uncharacterized protein (396 aa).

An N6-(pyridoxal phosphate)lysine modification is found at Lys-219.

The protein belongs to the class-V pyridoxal-phosphate-dependent aminotransferase family. Pyridoxal 5'-phosphate is required as a cofactor.

It localises to the cytoplasm. Its subcellular location is the nucleus. This is an uncharacterized protein from Schizosaccharomyces pombe (strain 972 / ATCC 24843) (Fission yeast).